A 502-amino-acid chain; its full sequence is Probable glycine dehydrogenase (decarboxylating) subunit 2 (502 aa).

K273 is subject to N6-(pyridoxal phosphate)lysine.

The protein belongs to the GcvP family. C-terminal subunit subfamily. As to quaternary structure, the glycine cleavage system is composed of four proteins: P, T, L and H. In this organism, the P 'protein' is a heterodimer of two subunits. The cofactor is pyridoxal 5'-phosphate.

It carries out the reaction N(6)-[(R)-lipoyl]-L-lysyl-[glycine-cleavage complex H protein] + glycine + H(+) = N(6)-[(R)-S(8)-aminomethyldihydrolipoyl]-L-lysyl-[glycine-cleavage complex H protein] + CO2. Functionally, the glycine cleavage system catalyzes the degradation of glycine. The P protein binds the alpha-amino group of glycine through its pyridoxal phosphate cofactor; CO(2) is released and the remaining methylamine moiety is then transferred to the lipoamide cofactor of the H protein. The protein is Probable glycine dehydrogenase (decarboxylating) subunit 2 of Staphylococcus epidermidis (strain ATCC 35984 / DSM 28319 / BCRC 17069 / CCUG 31568 / BM 3577 / RP62A).